Consider the following 193-residue polypeptide: Ion-translocating oxidoreductase complex subunit A (193 aa).

6 helical membrane-spanning segments follow: residues 5 to 25 (LLLF…FLGL), 47 to 67 (FVIT…LLPL), 72 to 92 (LRTM…EMVV), 102 to 122 (LLGI…VPLL), 134 to 154 (AIYG…FAGV), and 171 to 191 (SIAL…AGLV).

Belongs to the NqrDE/RnfAE family. As to quaternary structure, the complex is composed of six subunits: RnfA, RnfB, RnfC, RnfD, RnfE and RnfG.

The protein resides in the cell inner membrane. In terms of biological role, part of a membrane-bound complex that couples electron transfer with translocation of ions across the membrane. This chain is Ion-translocating oxidoreductase complex subunit A, found in Erwinia tasmaniensis (strain DSM 17950 / CFBP 7177 / CIP 109463 / NCPPB 4357 / Et1/99).